The following is a 326-amino-acid chain: Thioredoxin reductase (326 aa).

40–47 contributes to the FAD binding site; that stretch reads TGNNKGGQ. An intrachain disulfide couples Cys141 to Cys144. 291-300 is an FAD binding site; that stretch reads DVIDHVYKQA.

Belongs to the class-II pyridine nucleotide-disulfide oxidoreductase family. Homodimer. The cofactor is FAD.

The protein localises to the cytoplasm. The catalysed reaction is [thioredoxin]-dithiol + NADP(+) = [thioredoxin]-disulfide + NADPH + H(+). The chain is Thioredoxin reductase (trxB) from Buchnera aphidicola subsp. Baizongia pistaciae (strain Bp).